The primary structure comprises 102 residues: Large ribosomal subunit protein bL21 (102 aa).

The protein belongs to the bacterial ribosomal protein bL21 family. In terms of assembly, part of the 50S ribosomal subunit. Contacts protein L20.

This protein binds to 23S rRNA in the presence of protein L20. This Clavibacter sepedonicus (Clavibacter michiganensis subsp. sepedonicus) protein is Large ribosomal subunit protein bL21.